The following is a 616-amino-acid chain: Dihydroxy-acid dehydratase (616 aa).

Asp81 contributes to the Mg(2+) binding site. Residue Cys122 participates in [2Fe-2S] cluster binding. 2 residues coordinate Mg(2+): Asp123 and Lys124. At Lys124 the chain carries N6-carboxylysine. Position 195 (Cys195) interacts with [2Fe-2S] cluster. Glu491 is a Mg(2+) binding site. The Proton acceptor role is filled by Ser517.

Belongs to the IlvD/Edd family. In terms of assembly, homodimer. Requires [2Fe-2S] cluster as cofactor. Mg(2+) serves as cofactor.

The catalysed reaction is (2R)-2,3-dihydroxy-3-methylbutanoate = 3-methyl-2-oxobutanoate + H2O. It carries out the reaction (2R,3R)-2,3-dihydroxy-3-methylpentanoate = (S)-3-methyl-2-oxopentanoate + H2O. It functions in the pathway amino-acid biosynthesis; L-isoleucine biosynthesis; L-isoleucine from 2-oxobutanoate: step 3/4. Its pathway is amino-acid biosynthesis; L-valine biosynthesis; L-valine from pyruvate: step 3/4. Functionally, functions in the biosynthesis of branched-chain amino acids. Catalyzes the dehydration of (2R,3R)-2,3-dihydroxy-3-methylpentanoate (2,3-dihydroxy-3-methylvalerate) into 2-oxo-3-methylpentanoate (2-oxo-3-methylvalerate) and of (2R)-2,3-dihydroxy-3-methylbutanoate (2,3-dihydroxyisovalerate) into 2-oxo-3-methylbutanoate (2-oxoisovalerate), the penultimate precursor to L-isoleucine and L-valine, respectively. This chain is Dihydroxy-acid dehydratase, found in Escherichia coli O81 (strain ED1a).